We begin with the raw amino-acid sequence, 271 residues long: 3-methyl-2-oxobutanoate hydroxymethyltransferase (271 aa).

Positions 51 and 90 each coordinate Mg(2+). 3-methyl-2-oxobutanoate-binding positions include 51–52 (DS), D90, and K118. E120 is a binding site for Mg(2+). The active-site Proton acceptor is E186.

Belongs to the PanB family. As to quaternary structure, homodecamer; pentamer of dimers. Mg(2+) serves as cofactor.

The protein resides in the cytoplasm. It carries out the reaction 3-methyl-2-oxobutanoate + (6R)-5,10-methylene-5,6,7,8-tetrahydrofolate + H2O = 2-dehydropantoate + (6S)-5,6,7,8-tetrahydrofolate. The protein operates within cofactor biosynthesis; (R)-pantothenate biosynthesis; (R)-pantoate from 3-methyl-2-oxobutanoate: step 1/2. Catalyzes the reversible reaction in which hydroxymethyl group from 5,10-methylenetetrahydrofolate is transferred onto alpha-ketoisovalerate to form ketopantoate. This is 3-methyl-2-oxobutanoate hydroxymethyltransferase from Xanthomonas euvesicatoria pv. vesicatoria (strain 85-10) (Xanthomonas campestris pv. vesicatoria).